Here is a 508-residue protein sequence, read N- to C-terminus: Aldehyde dehydrogenase family 7 member A1 (508 aa).

244 to 249 (GSSKVG) contributes to the NAD(+) binding site. The active-site Proton acceptor is the Glu266. Cys300 (nucleophile) is an active-site residue.

Belongs to the aldehyde dehydrogenase family. Homotetramer.

It catalyses the reaction an aldehyde + NAD(+) + H2O = a carboxylate + NADH + 2 H(+). This Pisum sativum (Garden pea) protein is Aldehyde dehydrogenase family 7 member A1.